A 375-amino-acid polypeptide reads, in one-letter code: 23S rRNA (uracil(747)-C(5))-methyltransferase RlmC (375 aa).

Positions 3, 11, 14, and 87 each coordinate [4Fe-4S] cluster. S-adenosyl-L-methionine-binding residues include Q212, F241, E262, and N307. Catalysis depends on C334, which acts as the Nucleophile.

It belongs to the class I-like SAM-binding methyltransferase superfamily. RNA M5U methyltransferase family. RlmC subfamily.

It carries out the reaction uridine(747) in 23S rRNA + S-adenosyl-L-methionine = 5-methyluridine(747) in 23S rRNA + S-adenosyl-L-homocysteine + H(+). Functionally, catalyzes the formation of 5-methyl-uridine at position 747 (m5U747) in 23S rRNA. The protein is 23S rRNA (uracil(747)-C(5))-methyltransferase RlmC of Escherichia coli O9:H4 (strain HS).